A 552-amino-acid polypeptide reads, in one-letter code: DUF724 domain-containing protein 10 (552 aa).

Residues 308–361 form a disordered region; the sequence is SSLTQGSGDKTEVETQRKTFPKKTLPRNQNGSGNDSTLENENSNRKRKREENLC. The segment covering 333–348 has biased composition (polar residues); it reads PRNQNGSGNDSTLENE. The 173-residue stretch at 371–543 folds into the DUF724 domain; it reads ILFEKKLPVW…LEFQATASAP (173 aa).

Expressed at low levels in leaves, stems, flowers and siliques.

In terms of biological role, may be involved in the polar growth of plant cells via transportation of RNAs. The polypeptide is DUF724 domain-containing protein 10 (Arabidopsis thaliana (Mouse-ear cress)).